The chain runs to 466 residues: Argininosuccinate lyase 1 (466 aa).

This sequence belongs to the lyase 1 family. Argininosuccinate lyase subfamily.

The protein localises to the cytoplasm. The catalysed reaction is 2-(N(omega)-L-arginino)succinate = fumarate + L-arginine. It functions in the pathway amino-acid biosynthesis; L-arginine biosynthesis; L-arginine from L-ornithine and carbamoyl phosphate: step 3/3. In Agrobacterium fabrum (strain C58 / ATCC 33970) (Agrobacterium tumefaciens (strain C58)), this protein is Argininosuccinate lyase 1.